The following is a 517-amino-acid chain: Bifunctional purine biosynthesis protein PurH (517 aa).

The MGS-like domain occupies 1-145 (MSPLALVSVS…KNHKDVSVLV (145 aa)).

This sequence belongs to the PurH family.

It catalyses the reaction (6R)-10-formyltetrahydrofolate + 5-amino-1-(5-phospho-beta-D-ribosyl)imidazole-4-carboxamide = 5-formamido-1-(5-phospho-D-ribosyl)imidazole-4-carboxamide + (6S)-5,6,7,8-tetrahydrofolate. The catalysed reaction is IMP + H2O = 5-formamido-1-(5-phospho-D-ribosyl)imidazole-4-carboxamide. It participates in purine metabolism; IMP biosynthesis via de novo pathway; 5-formamido-1-(5-phospho-D-ribosyl)imidazole-4-carboxamide from 5-amino-1-(5-phospho-D-ribosyl)imidazole-4-carboxamide (10-formyl THF route): step 1/1. It functions in the pathway purine metabolism; IMP biosynthesis via de novo pathway; IMP from 5-formamido-1-(5-phospho-D-ribosyl)imidazole-4-carboxamide: step 1/1. The chain is Bifunctional purine biosynthesis protein PurH from Prochlorococcus marinus (strain AS9601).